A 108-amino-acid polypeptide reads, in one-letter code: ATP-dependent Clp protease adapter protein ClpS (108 aa).

The protein belongs to the ClpS family. In terms of assembly, binds to the N-terminal domain of the chaperone ClpA.

Its function is as follows. Involved in the modulation of the specificity of the ClpAP-mediated ATP-dependent protein degradation. The protein is ATP-dependent Clp protease adapter protein ClpS of Leptospira borgpetersenii serovar Hardjo-bovis (strain JB197).